Here is a 583-residue protein sequence, read N- to C-terminus: Asparagine synthetase, root [glutamine-hydrolyzing] (583 aa).

C2 acts as the For GATase activity in catalysis. The region spanning 2–185 is the Glutamine amidotransferase type-2 domain; sequence CGILAVLGCS…PGHLYSSKDS (184 aa). L-glutamine is bound by residues 50 to 54, 75 to 77, and D98; these read RLAIV and NGE. Residues L231, V267, and 341 to 342 contribute to the ATP site; that span reads SG. Residues 237 to 516 enclose the Asparagine synthetase domain; sequence DSSLVASITS…PQNSARLTVP (280 aa).

Roots.

The enzyme catalyses L-aspartate + L-glutamine + ATP + H2O = L-asparagine + L-glutamate + AMP + diphosphate + H(+). It functions in the pathway amino-acid biosynthesis; L-asparagine biosynthesis; L-asparagine from L-aspartate (L-Gln route): step 1/1. The protein is Asparagine synthetase, root [glutamine-hydrolyzing] (AS2) of Pisum sativum (Garden pea).